We begin with the raw amino-acid sequence, 332 residues long: Heterogeneous nuclear ribonucleoprotein A/B (332 aa).

The segment at 1–66 (MSEAGEEQPM…DQINASKNEE (66 aa)) is disordered. Positions 29 to 49 (GRGWTGAAAGAGGATAAPPSG) are enriched in low complexity. 2 consecutive RRM domains span residues 69 to 154 (GKMF…PVKK) and 153 to 233 (KKIF…QPKE). Residue Ser-81 is modified to Phosphoserine. Glycyl lysine isopeptide (Lys-Gly) (interchain with G-Cter in SUMO2) cross-links involve residues Lys-130 and Lys-203. An N6-acetyllysine modification is found at Lys-215. Residues 235–268 (YQQQQYGSGGRGNRNRGNRGSGGGGGGGGQSQSW) form a disordered region. Position 242 is a phosphoserine (Ser-242). A Dimethylated arginine; alternate modification is found at Arg-245. At Arg-245 the chain carries Omega-N-methylarginine; alternate. Omega-N-methylarginine occurs at positions 250, 251, 253, and 254. Gly residues predominate over residues 253 to 264 (RGSGGGGGGGGQ). Phosphoserine is present on residues Ser-255 and Gly-256. Residues Gly-271, Tyr-272, and Lys-318 each carry the N6-acetyllysine modification. The tract at residues 311–332 (QGSTNYGKSQRRGGHQNNYKPY) is disordered. Arg-322 carries the dimethylated arginine; alternate modification. An Omega-N-methylarginine; alternate modification is found at Arg-322. At Arg-322 the chain carries Asymmetric dimethylarginine; alternate.

Identified in a IGF2BP1-dependent mRNP granule complex containing untranslated mRNAs. Interacts with APOBEC1. In terms of processing, dimethylation at Arg-322 is probably asymmetric. In terms of tissue distribution, ubiquitous.

It is found in the nucleus. Its subcellular location is the cytoplasm. In terms of biological role, binds single-stranded RNA. Has a high affinity for G-rich and U-rich regions of hnRNA. Also binds to APOB mRNA transcripts around the RNA editing site. The protein is Heterogeneous nuclear ribonucleoprotein A/B (HNRNPAB) of Homo sapiens (Human).